Consider the following 537-residue polypeptide: Methionine--tRNA ligase (537 aa).

The 'HIGH' region motif lies at A11 to H21. The short motif at K301–S305 is the 'KMSKS' region element. K304 contributes to the ATP binding site. The disordered stretch occupies residues P503–E537. Residues S526–E537 are compositionally biased toward basic residues.

This sequence belongs to the class-I aminoacyl-tRNA synthetase family. MetG type 2B subfamily. Monomer.

It localises to the cytoplasm. The enzyme catalyses tRNA(Met) + L-methionine + ATP = L-methionyl-tRNA(Met) + AMP + diphosphate. Is required not only for elongation of protein synthesis but also for the initiation of all mRNA translation through initiator tRNA(fMet) aminoacylation. The chain is Methionine--tRNA ligase from Mycobacterium leprae (strain TN).